Consider the following 250-residue polypeptide: Large ribosomal subunit protein uL30 (250 aa).

This sequence belongs to the universal ribosomal protein uL30 family.

The chain is Large ribosomal subunit protein uL30 (RPL7) from Yarrowia lipolytica (strain CLIB 122 / E 150) (Yeast).